The following is a 404-amino-acid chain: Tryptophan synthase beta chain (404 aa).

N6-(pyridoxal phosphate)lysine is present on Lys-94.

Belongs to the TrpB family. In terms of assembly, tetramer of two alpha and two beta chains. It depends on pyridoxal 5'-phosphate as a cofactor.

It catalyses the reaction (1S,2R)-1-C-(indol-3-yl)glycerol 3-phosphate + L-serine = D-glyceraldehyde 3-phosphate + L-tryptophan + H2O. It functions in the pathway amino-acid biosynthesis; L-tryptophan biosynthesis; L-tryptophan from chorismate: step 5/5. In terms of biological role, the beta subunit is responsible for the synthesis of L-tryptophan from indole and L-serine. The sequence is that of Tryptophan synthase beta chain from Staphylococcus aureus (strain USA300).